A 245-amino-acid chain; its full sequence is S-methyl-5'-thioinosine phosphorylase (245 aa).

Phosphate contacts are provided by residues threonine 10 and arginine 52 to histidine 53. A substrate-binding site is contributed by methionine 185. Threonine 186 serves as a coordination point for phosphate. Asparagine 209 to alanine 211 is a substrate binding site.

It belongs to the PNP/MTAP phosphorylase family. MTAP subfamily. As to quaternary structure, homotrimer.

The enzyme catalyses S-methyl-5'-thioinosine + phosphate = 5-(methylsulfanyl)-alpha-D-ribose 1-phosphate + hypoxanthine. Its pathway is purine metabolism; purine nucleoside salvage. Functionally, catalyzes the reversible phosphorylation of S-methyl-5'-thioinosine (MTI) to hypoxanthine and 5-methylthioribose-1-phosphate. Involved in the breakdown of S-methyl-5'-thioadenosine (MTA), a major by-product of polyamine biosynthesis. Catabolism of (MTA) occurs via deamination to MTI and phosphorolysis to hypoxanthine. Involved in quorum sensing. This is S-methyl-5'-thioinosine phosphorylase from Pseudomonas aeruginosa (strain ATCC 15692 / DSM 22644 / CIP 104116 / JCM 14847 / LMG 12228 / 1C / PRS 101 / PAO1).